The primary structure comprises 134 residues: Methylglyoxal synthase (134 aa).

The MGS-like domain occupies 1-134 (MKIALIAHDR…DWRLIQERRN (134 aa)). Residues H8, K12, 34–37 (TGTT), and 54–55 (SG) contribute to the substrate site. The Proton donor/acceptor role is filled by D60. Residue H87 coordinates substrate.

Belongs to the methylglyoxal synthase family.

The catalysed reaction is dihydroxyacetone phosphate = methylglyoxal + phosphate. Functionally, catalyzes the formation of methylglyoxal from dihydroxyacetone phosphate. The protein is Methylglyoxal synthase of Lysinibacillus sphaericus (strain C3-41).